The sequence spans 778 residues: Ribonucleoside-diphosphate reductase large subunit (778 aa).

Substrate contacts are provided by residues Ser177, 192–193 (SC), Gly221, 419–423 (NLCIE), and 613–617 (PTATS). Cysteines 193 and 439 form a disulfide. The Proton acceptor role is filled by Asn419. Residue Cys421 is the Cysteine radical intermediate of the active site. Glu423 serves as the catalytic Proton acceptor.

It belongs to the ribonucleoside diphosphate reductase large chain family. Heterotetramer composed of a homodimer of the large subunit (R1) and a homodimer of the small subunit (R2). Larger multisubunit protein complex are also active, composed of (R1)n(R2)n.

It catalyses the reaction a 2'-deoxyribonucleoside 5'-diphosphate + [thioredoxin]-disulfide + H2O = a ribonucleoside 5'-diphosphate + [thioredoxin]-dithiol. Under complex allosteric control mediated by deoxynucleoside triphosphates and ATP binding. The type of nucleotide bound at the specificity site determines substrate preference. It seems probable that ATP makes the enzyme reduce CDP and UDP, dGTP favors ADP reduction and dTTP favors GDP reduction. Functionally, ribonucleoside-diphosphate reductase holoenzyme provides the precursors necessary for viral DNA synthesis. Allows virus growth in non-dividing cells. Catalyzes the biosynthesis of deoxyribonucleotides from the corresponding ribonucleotides. The polypeptide is Ribonucleoside-diphosphate reductase large subunit (African swine fever virus (isolate Tick/South Africa/Pretoriuskop Pr4/1996) (ASFV)).